Here is a 930-residue protein sequence, read N- to C-terminus: Nonribosomal peptide synthetase btyA (930 aa).

An adenylation (A) domain region spans residues 31 to 440 (ESPHRLTYAE…RGRSKELICI (410 aa)). A Carrier domain is found at 570-647 (PAGNETETLL…VLARQLQDGH (78 aa)). Ser-607 is subject to O-(pantetheine 4'-phosphoryl)serine. A thioesterase (TE) domain region spans residues 667 to 920 (PLWLIHPIGG…EDNVHKVYRV (254 aa)).

It belongs to the NRP synthetase family.

The enzyme catalyses 2 3-(4-hydroxyphenyl)pyruvate + H(+) = (2S)-2-(4-hydoxybenzyl)-3-(4-hydroxyphenyl)-2-furonol carboxylate + H2O. It functions in the pathway secondary metabolite biosynthesis. Functionally, nonribosomal peptide synthetase; part of the gene cluster that mediates the biosynthesis of butyrolactones, natural products that show a wide range of biological activities such as antitumor, antiparasitic or anti-inflammatory activity. The nonribosomal peptide synthetase btyA is responsible for the production of butyrolactone II, the core structure of butyrolactones. BtyA first activates 4-hydroxyphenylpyruvate (HPPA) through its A domain to AMP-HPPA. The HPPA unit is then loaded to the T domain and eventually transferred to the TE domain. Upon loading of another HPPA unit to the T domain, the TE domain promotes the enolate formation on the unit attached. Then aldol condensation establishes the carbon-carbon bond between the two units, followed by ester cyclization, and keto-enol tautomerization to yield the gamma-butyrolactone core. Hydrolysis, and finally esterification of the exposed carboxylic acid group yields butyrolactone II. Two additional enzymes, a prenyltransferase and an epoxidase, may be involved in the tailoring modifications of butyrolactone II to give butyrolactone III and butyrolactone I. The sequence is that of Nonribosomal peptide synthetase btyA from Aspergillus terreus (strain NIH 2624 / FGSC A1156).